Consider the following 197-residue polypeptide: Protein SPMIP2 (197 aa).

The segment at 161–197 (SKAALPIGSRPPKLPKLPKKEEKSKFRPLHQHDARCY) is disordered. Positions 178–197 (PKKEEKSKFRPLHQHDARCY) are enriched in basic and acidic residues.

The chain is Protein SPMIP2 (SPMIP2) from Bos taurus (Bovine).